Reading from the N-terminus, the 221-residue chain is Very-long-chain (3R)-3-hydroxyacyl-CoA dehydratase PASTICCINO 2A (221 aa).

The Cytoplasmic portion of the chain corresponds to 1 to 11 (MAGVGSAVRRL). Residues 12 to 32 (YLSVYNWAVFFGWAQVLYYAV) traverse the membrane as a helical segment. The Lumenal segment spans residues 33–51 (TTLLESGHEAVYAAVERPL). A helical transmembrane segment spans residues 52 to 70 (QFAQTAAFLEILHGLVGLV). The Cytoplasmic portion of the chain corresponds to 71–76 (RSPVSA). A helical membrane pass occupies residues 77–95 (TLPQIGSRLFLTWGILWSF). Residues 96-100 (PETHS) lie on the Lumenal side of the membrane. The chain crosses the membrane as a helical span at residues 101 to 121 (HILVTSLVISWSITEIIRYSF). The Cytoplasmic segment spans residues 122-141 (FGMKEAFGFAPSWLLWLRYS). Residues 142–165 (TFMVLYPTGISSEVGLIYIALPYM) traverse the membrane as a helical segment. Active-site residues include Y147 and E154. Residues 166 to 184 (KASEKYCLRMPNKWNFSFD) lie on the Lumenal side of the membrane. The helical transmembrane segment at 185–209 (FFYASILSLAIYVPGSPHMFTYMLA) threads the bilayer. Topologically, residues 210–221 (QRKKALAKAKAA) are cytoplasmic.

The protein belongs to the very long-chain fatty acids dehydratase HACD family.

Its subcellular location is the endoplasmic reticulum membrane. It carries out the reaction a very-long-chain (3R)-3-hydroxyacyl-CoA = a very-long-chain (2E)-enoyl-CoA + H2O. The protein operates within lipid metabolism; fatty acid biosynthesis. Its function is as follows. Catalyzes the third of the four reactions of the long-chain fatty acids elongation cycle. This endoplasmic reticulum-bound enzymatic process, allows the addition of two carbons to the chain of long- and very long-chain fatty acids/VLCFAs per cycle. This enzyme catalyzes the dehydration of the 3-hydroxyacyl-CoA intermediate into trans-2,3-enoyl-CoA, within each cycle of fatty acid elongation. Thereby, it participates in the production of VLCFAs of different chain lengths that are involved in multiple biological processes as precursors of membrane lipids and lipid mediators. May be an anti-phosphatase that prevents CDKA-1 dephosphorylation and activation. Involved in the hormonal control of cell division and differentiation. Required for proliferation control of meristematic and non-meristematic cells. Negative regulator of the cell cycle. The protein is Very-long-chain (3R)-3-hydroxyacyl-CoA dehydratase PASTICCINO 2A (PAS2A) of Oryza sativa subsp. japonica (Rice).